The following is a 75-amino-acid chain: MARFFRRRKFCRFTAEGVQEIDYKDVATLKNYITEAGKIVPSRITGTRAKYQRQLARAIKRSRYLALLPYTDKHL.

Belongs to the bacterial ribosomal protein bS18 family. In terms of assembly, part of the 30S ribosomal subunit. Forms a tight heterodimer with protein bS6.

In terms of biological role, binds as a heterodimer with protein bS6 to the central domain of the 16S rRNA, where it helps stabilize the platform of the 30S subunit. This chain is Small ribosomal subunit protein bS18, found in Aliivibrio fischeri (strain ATCC 700601 / ES114) (Vibrio fischeri).